A 719-amino-acid chain; its full sequence is Glycine--tRNA ligase beta subunit (719 aa).

The interval Pro-65–Lys-84 is disordered.

It belongs to the class-II aminoacyl-tRNA synthetase family. In terms of assembly, tetramer of two alpha and two beta subunits.

It localises to the cytoplasm. The catalysed reaction is tRNA(Gly) + glycine + ATP = glycyl-tRNA(Gly) + AMP + diphosphate. In Trichodesmium erythraeum (strain IMS101), this protein is Glycine--tRNA ligase beta subunit.